The following is a 247-amino-acid chain: Homeobox-leucine zipper protein HOX17 (247 aa).

Residues 58-81 (ERAGLRGGGGSDEEDGGCGIDGSR) form a disordered region. The homeobox DNA-binding region spans 79-138 (GSRKKLRLSKDQSAVLEDSFREHPTLNPRQKATLAQQLGLRPRQVEVWFQNRRARTKLKQ). The segment at 137–182 (KQTEVDCEFLKRCCETLTEENRRLQKEVQELRALKLVSPHLYMNMS) is leucine-zipper.

The protein belongs to the HD-ZIP homeobox family. Class II subfamily. In terms of tissue distribution, expressed in seedlings, roots, stems, leaf sheaths and blades and panicles.

The protein localises to the nucleus. Its function is as follows. Probable transcription factor. This is Homeobox-leucine zipper protein HOX17 (HOX17) from Oryza sativa subsp. indica (Rice).